Reading from the N-terminus, the 249-residue chain is DNA polymerase sliding clamp 1 (249 aa).

It belongs to the PCNA family. Forms heterodimers with PCNA2, which then recruit PCNA3; does not form homotrimers. The heterodimers interact with RfcS homotetramers. Heterotrimer which circularizes head-to-tail (head is at N-terminus, tail is at C-terminus) to form a toroid; DNA passes through its center. Replication factor C (RFC) is required to load the toroid on the DNA. Heterotrimer interacts, probably via this subunit, with flap endonuclease 1 (fen), Hjc, Dpo4, and XPF.

In terms of biological role, one of the sliding clamp subunits that acts as a moving platform for DNA processing. Responsible for tethering the catalytic subunit of DNA polymerase to DNA during high-speed replication. Heterotrimer stimulates the Holliday junction resolvase Hjc. DNA polymerase I, DNA ligase and the flap endonuclease may be constitutively associated with the PCNA heterotrimer forming a scanning complex able to couple DNA synthesis and Okazaki fragment maturation. The protein is DNA polymerase sliding clamp 1 of Saccharolobus solfataricus (strain ATCC 35092 / DSM 1617 / JCM 11322 / P2) (Sulfolobus solfataricus).